The primary structure comprises 363 residues: Protein-arginine kinase (363 aa).

In terms of domain architecture, Phosphagen kinase C-terminal spans 24–254; sequence IVLSSRIRLA…AQLIEQERSA (231 aa). Residues 27–31, H92, R125, 176–180, and 207–212 each bind ATP; these read SSRIR, RASVM, and RGIYGE. An RDXXRA motif of the pArg binding pocket involved in allosteric regulation motif is present at residues 337–342; the sequence is RDIRRA.

The protein belongs to the ATP:guanido phosphotransferase family.

It carries out the reaction L-arginyl-[protein] + ATP = N(omega)-phospho-L-arginyl-[protein] + ADP + H(+). Its activity is regulated as follows. Appears to be allosterically activated by the binding of pArg-containing polypeptides to the pArg-binding pocket localized in the C-terminal domain of McsB. Its function is as follows. Catalyzes the specific phosphorylation of arginine residues in a large number of proteins. Is part of the bacterial stress response system. Protein arginine phosphorylation has a physiologically important role and is involved in the regulation of many critical cellular processes, such as protein homeostasis, motility, competence, and stringent and stress responses, by regulating gene expression and protein activity. This is Protein-arginine kinase from Bacillus licheniformis (strain ATCC 14580 / DSM 13 / JCM 2505 / CCUG 7422 / NBRC 12200 / NCIMB 9375 / NCTC 10341 / NRRL NRS-1264 / Gibson 46).